We begin with the raw amino-acid sequence, 221 residues long: ATP-dependent dethiobiotin synthetase BioD (221 aa).

12–17 is an ATP binding site; that stretch reads EVGKTV. Thr-16 lines the Mg(2+) pocket. Residue Lys-39 is part of the active site. Residue Thr-43 coordinates substrate. ATP is bound by residues Asp-47, 105–108, and 165–166; these read EGLG and SC. Mg(2+) contacts are provided by Asp-47 and Glu-105.

Belongs to the dethiobiotin synthetase family. Homodimer. The cofactor is Mg(2+).

Its subcellular location is the cytoplasm. It carries out the reaction (7R,8S)-7,8-diammoniononanoate + CO2 + ATP = (4R,5S)-dethiobiotin + ADP + phosphate + 3 H(+). The enzyme catalyses (7R,8S)-8-amino-7-(carboxyamino)nonanoate + ATP = (4R,5S)-dethiobiotin + ADP + phosphate + H(+). It participates in cofactor biosynthesis; biotin biosynthesis; biotin from 7,8-diaminononanoate: step 1/2. Functionally, catalyzes a mechanistically unusual reaction, the ATP-dependent insertion of CO2 between the N7 and N8 nitrogen atoms of 7,8-diaminopelargonic acid (DAPA, also called 7,8-diammoniononanoate) to form a ureido ring. This cyanobacterium does not encode bioA (which catalyzes the formation of the precursor for this reaction in the cannonical pathway), instead it encodes bioU, which replaces bioA and also performs the first half of the cannonical BioD reaction. Thus in this organism BioD has a different substrate. This chain is ATP-dependent dethiobiotin synthetase BioD, found in Crocosphaera subtropica (strain ATCC 51142 / BH68) (Cyanothece sp. (strain ATCC 51142)).